The chain runs to 31 residues: Cyclotide vico-B (31 aa).

Residues 1 to 31 (GSIPCAESCVYIPCITGIAGCSCKNKVCYYN) constitute a cross-link (cyclopeptide (Gly-Asn)). 3 disulfides stabilise this stretch: Cys-5/Cys-21, Cys-9/Cys-23, and Cys-14/Cys-28.

It belongs to the cyclotide family. Bracelet subfamily. This is a cyclic peptide.

In terms of biological role, probably participates in a plant defense mechanism. In Viola cotyledon (Violeta), this protein is Cyclotide vico-B.